Here is a 183-residue protein sequence, read N- to C-terminus: MAQTGFGRRYFKAFVSGFFVAVPVTVTVLDRLAYVARVEGASMQPSLNPDGESSPDVVLLNRWSVRNYHVQRGDIVSVLSPKNPQQKIIKRVIGIEGDFIKTLGYKNRYVRVPDGHLWIEGDHHGHSFDSNAFGPVSLGLVHGRASHIIWPPSRWQRIEPSVPPDRRPLLNWDRAAEDKYDDD.

The helical transmembrane segment at 13–35 (AFVSGFFVAVPVTVTVLDRLAYV) threads the bilayer. Catalysis depends on residues Ser42 and Lys90. Positions 161–183 (SVPPDRRPLLNWDRAAEDKYDDD) are disordered. Basic and acidic residues predominate over residues 164–183 (PDRRPLLNWDRAAEDKYDDD).

This sequence belongs to the peptidase S26 family. IMP2 subfamily. Heterodimer of 2 subunits, IMMPL1 and IMMPL2.

The protein resides in the mitochondrion inner membrane. Catalyzes the removal of transit peptides required for the targeting of proteins from the mitochondrial matrix, across the inner membrane, into the inter-membrane space. In Danio rerio (Zebrafish), this protein is Mitochondrial inner membrane protease subunit 2 (immp2l).